The primary structure comprises 518 residues: ATP synthase subunit alpha (518 aa).

Residue 169-176 (GDRQTGKT) coordinates ATP.

Belongs to the ATPase alpha/beta chains family. F-type ATPases have 2 components, CF(1) - the catalytic core - and CF(0) - the membrane proton channel. CF(1) has five subunits: alpha(3), beta(3), gamma(1), delta(1), epsilon(1). CF(0) has three main subunits: a(1), b(2) and c(9-12). The alpha and beta chains form an alternating ring which encloses part of the gamma chain. CF(1) is attached to CF(0) by a central stalk formed by the gamma and epsilon chains, while a peripheral stalk is formed by the delta and b chains.

The protein localises to the cell membrane. It carries out the reaction ATP + H2O + 4 H(+)(in) = ADP + phosphate + 5 H(+)(out). Its function is as follows. Produces ATP from ADP in the presence of a proton gradient across the membrane. The alpha chain is a regulatory subunit. This is ATP synthase subunit alpha from Mycoplasma pneumoniae (strain ATCC 29342 / M129 / Subtype 1) (Mycoplasmoides pneumoniae).